The chain runs to 587 residues: MGYDRLGPSGPSNPNQKDPATSLPELQKKTKTKLILFTLAVLVVGVVCFGIFAGIRAVDSGKTEPKLTRKPTQAISRTCSKSLYPNLCIDTLLDFPGSLTADENELIHISFNATLQKFSKALYTSSTITYTQMPPRVRSAYDSCLELLDDSVDALTRALSSVVVVSGDESHSDVMTWLSSAMTNHDTCTDGFDEIEGQGGEVKDQVIGAVKDLSEMVSNCLAIFAGKVKDLSGVPVVNNRKLLGTEETEELPNWLKREDRELLGTPTSAIQADITVSKDGSGTFKTIAEAIKKAPEHSSRRFVIYVKAGRYEEENLKVGRKKTNLMFIGDGKGKTVITGGKSIADDLTTFHTATFAATGAGFIVRDMTFENYAGPAKHQAVALRVGGDHAVVYRCNIIGYQDALYVHSNRQFFRECEIYGTVDFIFGNAAVILQSCNIYARKPMAQQKITITAQNRKDPNQNTGISIHACKLLATPDLEASKGSYPTYLGRPWKLYSRVVYMMSDMGDHIDPRGWLEWNGPFALDSLYYGEYMNKGLGSGIGQRVKWPGYHVITSTVEASKFTVAQFISGSSWLPSTGVSFFSGLSQ.

A disordered region spans residues Met-1–Leu-23. A compositionally biased stretch (polar residues) spans Gly-10–Pro-19. The helical transmembrane segment at Ile-35–Ile-55 threads the bilayer. Residues Arg-69 to Ile-223 form a pectinesterase inhibitor 61 region. The pectinesterase 61 stretch occupies residues Asp-273–Ser-571. Thr-349 and Gln-379 together coordinate substrate. Catalysis depends on Asp-402, which acts as the Proton donor; for pectinesterase activity. A disulfide bond links Cys-416 and Cys-436. Asp-423 functions as the Nucleophile; for pectinesterase activity in the catalytic mechanism. Substrate-binding residues include Arg-491 and Trp-493.

In the N-terminal section; belongs to the PMEI family. The protein in the C-terminal section; belongs to the pectinesterase family. As to expression, expressed in siliques, floral stems and rosettes leaves.

Its subcellular location is the membrane. The enzyme catalyses [(1-&gt;4)-alpha-D-galacturonosyl methyl ester](n) + n H2O = [(1-&gt;4)-alpha-D-galacturonosyl](n) + n methanol + n H(+). The protein operates within glycan metabolism; pectin degradation; 2-dehydro-3-deoxy-D-gluconate from pectin: step 1/5. Acts in the modification of cell walls via demethylesterification of cell wall pectin. The polypeptide is Probable pectinesterase/pectinesterase inhibitor 61 (PME61) (Arabidopsis thaliana (Mouse-ear cress)).